Here is a 160-residue protein sequence, read N- to C-terminus: 3-hydroxyacyl-[acyl-carrier-protein] dehydratase FabZ (160 aa).

The active site involves His-63.

Belongs to the thioester dehydratase family. FabZ subfamily.

The protein localises to the cytoplasm. The enzyme catalyses a (3R)-hydroxyacyl-[ACP] = a (2E)-enoyl-[ACP] + H2O. Functionally, involved in unsaturated fatty acids biosynthesis. Catalyzes the dehydration of short chain beta-hydroxyacyl-ACPs and long chain saturated and unsaturated beta-hydroxyacyl-ACPs. This is 3-hydroxyacyl-[acyl-carrier-protein] dehydratase FabZ from Xylella fastidiosa (strain M23).